The chain runs to 614 residues: uncharacterized protein (614 aa).

This is an uncharacterized protein from Lactococcus lactis subsp. cremoris (strain MG1363).